The sequence spans 172 residues: 3-hydroxydecanoyl-[acyl-carrier-protein] dehydratase (172 aa).

His71 is a catalytic residue.

It belongs to the thioester dehydratase family. FabA subfamily. In terms of assembly, homodimer.

The protein localises to the cytoplasm. The enzyme catalyses a (3R)-hydroxyacyl-[ACP] = a (2E)-enoyl-[ACP] + H2O. It carries out the reaction (3R)-hydroxydecanoyl-[ACP] = (2E)-decenoyl-[ACP] + H2O. It catalyses the reaction (2E)-decenoyl-[ACP] = (3Z)-decenoyl-[ACP]. Its pathway is lipid metabolism; fatty acid biosynthesis. In terms of biological role, necessary for the introduction of cis unsaturation into fatty acids. Catalyzes the dehydration of (3R)-3-hydroxydecanoyl-ACP to E-(2)-decenoyl-ACP and then its isomerization to Z-(3)-decenoyl-ACP. Can catalyze the dehydratase reaction for beta-hydroxyacyl-ACPs with saturated chain lengths up to 16:0, being most active on intermediate chain length. This is 3-hydroxydecanoyl-[acyl-carrier-protein] dehydratase from Salmonella choleraesuis (strain SC-B67).